The primary structure comprises 141 residues: Large ribosomal subunit protein uL11 (141 aa).

It belongs to the universal ribosomal protein uL11 family. Part of the ribosomal stalk of the 50S ribosomal subunit. Interacts with L10 and the large rRNA to form the base of the stalk. L10 forms an elongated spine to which L12 dimers bind in a sequential fashion forming a multimeric L10(L12)X complex. In terms of processing, one or more lysine residues are methylated.

In terms of biological role, forms part of the ribosomal stalk which helps the ribosome interact with GTP-bound translation factors. The chain is Large ribosomal subunit protein uL11 from Streptococcus equi subsp. equi (strain 4047).